A 458-amino-acid chain; its full sequence is UDP-N-acetylglucosamine 1-carboxyvinyltransferase (458 aa).

34-35 serves as a coordination point for phosphoenolpyruvate; it reads KN. UDP-N-acetyl-alpha-D-glucosamine is bound at residue arginine 104. Catalysis depends on cysteine 128, which acts as the Proton donor. Cysteine 128 is modified (2-(S-cysteinyl)pyruvic acid O-phosphothioketal). Aspartate 320 and valine 342 together coordinate UDP-N-acetyl-alpha-D-glucosamine.

Belongs to the EPSP synthase family. MurA subfamily.

It localises to the cytoplasm. It carries out the reaction phosphoenolpyruvate + UDP-N-acetyl-alpha-D-glucosamine = UDP-N-acetyl-3-O-(1-carboxyvinyl)-alpha-D-glucosamine + phosphate. It functions in the pathway cell wall biogenesis; peptidoglycan biosynthesis. Its function is as follows. Cell wall formation. Adds enolpyruvyl to UDP-N-acetylglucosamine. The polypeptide is UDP-N-acetylglucosamine 1-carboxyvinyltransferase (Prochlorococcus marinus (strain NATL2A)).